A 354-amino-acid chain; its full sequence is Glycerol-3-phosphate dehydrogenase [NAD(P)+] (354 aa).

NADPH contacts are provided by Ser27, Phe28, Arg48, and Lys121. Residues Lys121 and Gly149 each coordinate sn-glycerol 3-phosphate. Residue Ala153 participates in NADPH binding. Sn-glycerol 3-phosphate contacts are provided by Lys204, Asp257, Ser267, Arg268, and Asn269. Lys204 (proton acceptor) is an active-site residue. Residue Arg268 participates in NADPH binding. Residues Val292 and Glu294 each coordinate NADPH.

The protein belongs to the NAD-dependent glycerol-3-phosphate dehydrogenase family.

The protein resides in the cytoplasm. The enzyme catalyses sn-glycerol 3-phosphate + NAD(+) = dihydroxyacetone phosphate + NADH + H(+). It catalyses the reaction sn-glycerol 3-phosphate + NADP(+) = dihydroxyacetone phosphate + NADPH + H(+). It functions in the pathway membrane lipid metabolism; glycerophospholipid metabolism. Its function is as follows. Catalyzes the reduction of the glycolytic intermediate dihydroxyacetone phosphate (DHAP) to sn-glycerol 3-phosphate (G3P), the key precursor for phospholipid synthesis. The protein is Glycerol-3-phosphate dehydrogenase [NAD(P)+] of Pseudomonas fluorescens (strain Pf0-1).